Reading from the N-terminus, the 194-residue chain is Insertion element IS136 uncharacterized 21.2 kDa protein (194 aa).

The interval 73–103 (SCDRACAPTPGRDPPVSSLPNSRQPARQNPR) is disordered. Residues 90–103 (SLPNSRQPARQNPR) show a composition bias toward polar residues.

The polypeptide is Insertion element IS136 uncharacterized 21.2 kDa protein (Agrobacterium tumefaciens (strain T37)).